The chain runs to 251 residues: PF03932 family protein CutC (251 aa).

The protein belongs to the CutC family.

The protein resides in the cytoplasm. The protein is PF03932 family protein CutC of Agrobacterium fabrum (strain C58 / ATCC 33970) (Agrobacterium tumefaciens (strain C58)).